Reading from the N-terminus, the 345-residue chain is Annexin A9 (345 aa).

Annexin repeat units lie at residues 41–112, 113–184, 197–266, and 270–341; these read FSVD…ALLQ, PTAQ…ALAK, NLAE…GLAS, and NTPL…ALCR.

Belongs to the annexin family. In terms of assembly, homodimer. In terms of tissue distribution, expressed in the stratified squamous skin epithelium, but not in epithelia of other types (at protein level).

Low affinity receptor for acetylcholine known to be targeted by disease-causing pemphigus vulgaris antibodies in keratinocytes. The polypeptide is Annexin A9 (ANXA9) (Homo sapiens (Human)).